The chain runs to 282 residues: Putative peroxisomal biogenesis factor 19 (282 aa).

The segment at 73-95 (QEEAMKKAGADPSEGEGEQPLDP) is disordered. C279 carries the cysteine methyl ester modification. C279 carries S-farnesyl cysteine lipidation. Residues 280-282 (SIM) constitute a propeptide, removed in mature form.

Belongs to the peroxin-19 family.

The protein localises to the peroxisome. This chain is Putative peroxisomal biogenesis factor 19 (prx-19), found in Caenorhabditis elegans.